Here is a 61-residue protein sequence, read N- to C-terminus: uncharacterized protein (61 aa).

This is an uncharacterized protein from Staphylococcus epidermidis.